A 395-amino-acid polypeptide reads, in one-letter code: Phosphopentomutase (395 aa).

Positions 14, 286, 291, 327, 328, and 339 each coordinate Mn(2+).

The protein belongs to the phosphopentomutase family. It depends on Mn(2+) as a cofactor.

The protein localises to the cytoplasm. The enzyme catalyses 2-deoxy-alpha-D-ribose 1-phosphate = 2-deoxy-D-ribose 5-phosphate. The catalysed reaction is alpha-D-ribose 1-phosphate = D-ribose 5-phosphate. The protein operates within carbohydrate degradation; 2-deoxy-D-ribose 1-phosphate degradation; D-glyceraldehyde 3-phosphate and acetaldehyde from 2-deoxy-alpha-D-ribose 1-phosphate: step 1/2. Isomerase that catalyzes the conversion of deoxy-ribose 1-phosphate (dRib-1-P) and ribose 1-phosphate (Rib-1-P) to deoxy-ribose 5-phosphate (dRib-5-P) and ribose 5-phosphate (Rib-5-P), respectively. This chain is Phosphopentomutase, found in Staphylococcus haemolyticus (strain JCSC1435).